We begin with the raw amino-acid sequence, 513 residues long: ATP synthase subunit alpha (513 aa).

169–176 contacts ATP; sequence GDRQTGKT.

The protein belongs to the ATPase alpha/beta chains family. F-type ATPases have 2 components, CF(1) - the catalytic core - and CF(0) - the membrane proton channel. CF(1) has five subunits: alpha(3), beta(3), gamma(1), delta(1), epsilon(1). CF(0) has three main subunits: a(1), b(2) and c(9-12). The alpha and beta chains form an alternating ring which encloses part of the gamma chain. CF(1) is attached to CF(0) by a central stalk formed by the gamma and epsilon chains, while a peripheral stalk is formed by the delta and b chains.

The protein localises to the cell inner membrane. The catalysed reaction is ATP + H2O + 4 H(+)(in) = ADP + phosphate + 5 H(+)(out). Functionally, produces ATP from ADP in the presence of a proton gradient across the membrane. The alpha chain is a regulatory subunit. The protein is ATP synthase subunit alpha of Shigella boydii serotype 18 (strain CDC 3083-94 / BS512).